The sequence spans 447 residues: UDP-glycosyltransferase 76B1 (447 aa).

UDP-alpha-D-glucose is bound by residues Ser-269, 327-328, 345-353, and 367-370; these read WA, HCGWNSTLE, and FGDQ.

The protein belongs to the UDP-glycosyltransferase family. In terms of tissue distribution, expressed in roots, leaves, hydathodes, sepals and style.

In terms of biological role, glycosylates the amino acid-related molecules isoleucic acid (2-hydroxy-3-methylpentanoic acid) and valic acid (2-hydroxy-3-methylbutyric acid). Acts as a negative regulator of salicylic acid (SA)-dependent plant defense in the absence of pathogens and promotes the jasmonate (JA) response. Negatively influences the onset of senescence. The protein is UDP-glycosyltransferase 76B1 of Arabidopsis thaliana (Mouse-ear cress).